We begin with the raw amino-acid sequence, 292 residues long: tRNA dimethylallyltransferase (292 aa).

5–12 provides a ligand contact to ATP; it reads APTGAGKT. 7–12 lines the substrate pocket; the sequence is TGAGKT. An interaction with substrate tRNA region spans residues 29–32; it reads DSRQ.

Belongs to the IPP transferase family. In terms of assembly, monomer. Mg(2+) serves as cofactor.

It carries out the reaction adenosine(37) in tRNA + dimethylallyl diphosphate = N(6)-dimethylallyladenosine(37) in tRNA + diphosphate. Functionally, catalyzes the transfer of a dimethylallyl group onto the adenine at position 37 in tRNAs that read codons beginning with uridine, leading to the formation of N6-(dimethylallyl)adenosine (i(6)A). The chain is tRNA dimethylallyltransferase from Leptospira borgpetersenii serovar Hardjo-bovis (strain JB197).